A 234-amino-acid chain; its full sequence is MSILHVTILTVFPEMFPGTLGYSLAGQALHNNIWSYDIINIRDFGLTKHKNVDDKAYGGGDGLIMRPDVLGNVIEYALSLNHNTKIYYPSPRGSVFTQSFAKEMLKNKNIIFLCGRYEGIDERVIAEYNVKEISVGDYILSGGEIPTLTILDCLIRLLPGVLINQNTLSSESFEKDGEFQGGLECDLYTRPKIWHGRAVPSILLSGNRKLINNWRKEQSRMITKLRRPELLKDL.

Residues Gly115 and 135–140 (VGDYIL) contribute to the S-adenosyl-L-methionine site.

Belongs to the RNA methyltransferase TrmD family. In terms of assembly, homodimer.

The protein localises to the cytoplasm. It carries out the reaction guanosine(37) in tRNA + S-adenosyl-L-methionine = N(1)-methylguanosine(37) in tRNA + S-adenosyl-L-homocysteine + H(+). Its function is as follows. Specifically methylates guanosine-37 in various tRNAs. The protein is tRNA (guanine-N(1)-)-methyltransferase of Rickettsia typhi (strain ATCC VR-144 / Wilmington).